Consider the following 66-residue polypeptide: DNA gyrase inhibitor YacG (66 aa).

Zn(2+) contacts are provided by C9, C12, C28, and C32.

This sequence belongs to the DNA gyrase inhibitor YacG family. In terms of assembly, interacts with GyrB. It depends on Zn(2+) as a cofactor.

Inhibits all the catalytic activities of DNA gyrase by preventing its interaction with DNA. Acts by binding directly to the C-terminal domain of GyrB, which probably disrupts DNA binding by the gyrase. This chain is DNA gyrase inhibitor YacG, found in Pseudomonas aeruginosa (strain LESB58).